A 126-amino-acid chain; its full sequence is Small ribosomal subunit protein uS13 (126 aa).

A disordered region spans residues 95–126 (NLPVHGQRTHTNARTRKGPRRAIAGKKKAGKK).

The protein belongs to the universal ribosomal protein uS13 family. As to quaternary structure, part of the 30S ribosomal subunit. Forms a loose heterodimer with protein S19. Forms two bridges to the 50S subunit in the 70S ribosome.

Its function is as follows. Located at the top of the head of the 30S subunit, it contacts several helices of the 16S rRNA. In the 70S ribosome it contacts the 23S rRNA (bridge B1a) and protein L5 of the 50S subunit (bridge B1b), connecting the 2 subunits; these bridges are implicated in subunit movement. Contacts the tRNAs in the A and P-sites. This is Small ribosomal subunit protein uS13 from Frankia casuarinae (strain DSM 45818 / CECT 9043 / HFP020203 / CcI3).